The primary structure comprises 126 residues: Aspartate 1-decarboxylase (126 aa).

Serine 25 serves as the catalytic Schiff-base intermediate with substrate; via pyruvic acid. Serine 25 is subject to Pyruvic acid (Ser). Threonine 57 contributes to the substrate binding site. Tyrosine 58 (proton donor) is an active-site residue. Residue 73 to 75 (GAA) participates in substrate binding.

It belongs to the PanD family. Heterooctamer of four alpha and four beta subunits. Requires pyruvate as cofactor. Is synthesized initially as an inactive proenzyme, which is activated by self-cleavage at a specific serine bond to produce a beta-subunit with a hydroxyl group at its C-terminus and an alpha-subunit with a pyruvoyl group at its N-terminus.

The protein resides in the cytoplasm. The catalysed reaction is L-aspartate + H(+) = beta-alanine + CO2. The protein operates within cofactor biosynthesis; (R)-pantothenate biosynthesis; beta-alanine from L-aspartate: step 1/1. Its function is as follows. Catalyzes the pyruvoyl-dependent decarboxylation of aspartate to produce beta-alanine. The protein is Aspartate 1-decarboxylase of Serratia proteamaculans (strain 568).